The chain runs to 377 residues: Alanine racemase (377 aa).

Lys-39 functions as the Proton acceptor; specific for D-alanine in the catalytic mechanism. Lys-39 bears the N6-(pyridoxal phosphate)lysine mark. Arg-137 provides a ligand contact to substrate. Catalysis depends on Tyr-266, which acts as the Proton acceptor; specific for L-alanine. Met-314 contacts substrate.

It belongs to the alanine racemase family. Pyridoxal 5'-phosphate serves as cofactor.

The catalysed reaction is L-alanine = D-alanine. It functions in the pathway amino-acid biosynthesis; D-alanine biosynthesis; D-alanine from L-alanine: step 1/1. In terms of biological role, catalyzes the interconversion of L-alanine and D-alanine. May also act on other amino acids. In Symbiobacterium thermophilum (strain DSM 24528 / JCM 14929 / IAM 14863 / T), this protein is Alanine racemase (alr).